The primary structure comprises 379 residues: Succinyl-diaminopimelate desuccinylase (379 aa).

Histidine 70 serves as a coordination point for Zn(2+). The active site involves aspartate 72. Aspartate 103 provides a ligand contact to Zn(2+). The active-site Proton acceptor is the glutamate 137. Zn(2+) contacts are provided by glutamate 138, glutamate 166, and histidine 352.

It belongs to the peptidase M20A family. DapE subfamily. Homodimer. Zn(2+) is required as a cofactor. Requires Co(2+) as cofactor.

The catalysed reaction is N-succinyl-(2S,6S)-2,6-diaminopimelate + H2O = (2S,6S)-2,6-diaminopimelate + succinate. It functions in the pathway amino-acid biosynthesis; L-lysine biosynthesis via DAP pathway; LL-2,6-diaminopimelate from (S)-tetrahydrodipicolinate (succinylase route): step 3/3. In terms of biological role, catalyzes the hydrolysis of N-succinyl-L,L-diaminopimelic acid (SDAP), forming succinate and LL-2,6-diaminopimelate (DAP), an intermediate involved in the bacterial biosynthesis of lysine and meso-diaminopimelic acid, an essential component of bacterial cell walls. This is Succinyl-diaminopimelate desuccinylase from Burkholderia lata (strain ATCC 17760 / DSM 23089 / LMG 22485 / NCIMB 9086 / R18194 / 383).